Here is a 437-residue protein sequence, read N- to C-terminus: Elongation factor 1-alpha (437 aa).

The tr-type G domain occupies 4–229 (KPHMNLVVIG…DQLQPPAKPV (226 aa)). The segment at 13-20 (GHVDHGKS) is G1. 13–20 (GHVDHGKS) lines the GTP pocket. Residue serine 20 participates in Mg(2+) binding. The interval 69–73 (GITID) is G2. Residues 90–93 (DAPG) are G3. GTP is bound by residues 90–94 (DAPGH) and 152–155 (NKMD). A G4 region spans residues 152 to 155 (NKMD). The tract at residues 193–195 (SAW) is G5.

Belongs to the TRAFAC class translation factor GTPase superfamily. Classic translation factor GTPase family. EF-Tu/EF-1A subfamily.

Its subcellular location is the cytoplasm. It carries out the reaction GTP + H2O = GDP + phosphate + H(+). In terms of biological role, GTP hydrolase that promotes the GTP-dependent binding of aminoacyl-tRNA to the A-site of ribosomes during protein biosynthesis. The sequence is that of Elongation factor 1-alpha from Aeropyrum pernix (strain ATCC 700893 / DSM 11879 / JCM 9820 / NBRC 100138 / K1).